The chain runs to 275 residues: Monooxygenase af470 (275 aa).

It carries out the reaction prefumagillin + NADPH + 2 O2 = fumagillin + acetaldehyde + NADP(+) + H2O. Its pathway is secondary metabolite biosynthesis; terpenoid biosynthesis. Functionally, monooxygenase; part of the gene cluster that mediates the biosynthesis of fumagillin, a meroterpenoid that has numerous biological activities including irreversible inhibition of human type 2 methionine aminopeptidase (METAP2). Within the pathway, the monooxygenase af470 catalyzes the oxidative cleavage of prefumagillin to yield the final compound of the pathway, fumagillin. The pathway begins with the conversion of farnesyl pyrophosphate (FPP) to beta-trans-bergamotene by the membrane-bound beta-trans-bergamotene synthase af520. The multifunctional cytochrome P450 monooxygenase af510 then converts beta-trans-bergamotene into 5-keto-demethoxyfumagillol via several oxydation steps. 5-keto-demethoxyfumagillol is then subjected to successive C-6 hydroxylation and O-methylation by the dioxygenase af480 and O-methyltransferase af390-400, respectively, to yield 5-keto-fumagillol, which is then stereoselectively reduced by the keto-reductase af490 to 5R-hydroxy-seco-sesquiterpene. The next step is the polyketide transferase af380-catalyzed transfer of a dodecapentaenoyl group synthesized by the polyketide synthase af370 onto 5R-hydroxy-seco-sesquiterpene which leads to the production of prefumagillin. Finally, oxidative cleavage by the monooxygenase af470 converts prefumagillin to fumagillin. The polypeptide is Monooxygenase af470 (Aspergillus fumigatus (strain ATCC MYA-4609 / CBS 101355 / FGSC A1100 / Af293) (Neosartorya fumigata)).